Consider the following 567-residue polypeptide: Septation ring formation regulator EzrA (567 aa).

Residues 1-2 lie on the Extracellular side of the membrane; it reads ME. A helical membrane pass occupies residues 3–21; it reads IAVIVLLLLGGVMIYNHVY. The Cytoplasmic portion of the chain corresponds to 22 to 567; that stretch reads RKKMYSEIDR…IFRDERSKEE (546 aa). 2 coiled-coil regions span residues 97–188 and 254–465; these read RYAK…LTAS and REIV…LEEK.

This sequence belongs to the EzrA family.

It is found in the cell membrane. Its function is as follows. Negative regulator of FtsZ ring formation; modulates the frequency and position of FtsZ ring formation. Inhibits FtsZ ring formation at polar sites. Interacts either with FtsZ or with one of its binding partners to promote depolymerization. In Geobacillus sp. (strain WCH70), this protein is Septation ring formation regulator EzrA.